We begin with the raw amino-acid sequence, 1849 residues long: Mitogen-activated protein kinase kinase kinase mkh1 (1849 aa).

Positions 1556 to 1825 (WFKGQLIGKG…TKLLAEHPFC (270 aa)) constitute a Protein kinase domain. ATP-binding positions include 1562–1570 (IGKGTYGRV) and K1585. D1686 (proton acceptor) is an active-site residue.

This sequence belongs to the protein kinase superfamily. STE Ser/Thr protein kinase family. MAP kinase kinase kinase subfamily.

The enzyme catalyses L-seryl-[protein] + ATP = O-phospho-L-seryl-[protein] + ADP + H(+). The catalysed reaction is L-threonyl-[protein] + ATP = O-phospho-L-threonyl-[protein] + ADP + H(+). Its function is as follows. Mitogen-activated protein kinase kinase kinase, part of the mkh1-mkk1-spm1 MAPK cascade that regulates vegetative growth, conidial formation, colony surface hydrophobicity, osmotic stress, cell wall integrity maintenance, carbon and nitrogen source utilization, chitin distribution, septa formation, and pathogenicity. The polypeptide is Mitogen-activated protein kinase kinase kinase mkh1 (Cytospora mali (Apple Valsa canker fungus)).